The sequence spans 189 residues: Movement protein (189 aa).

The protein belongs to the tombusvirus/aureusvirus movement protein p22 family.

It localises to the host membrane. Functionally, transports viral genome to neighboring plant cells directly through plasmosdesmata, without any budding. The movement protein allows efficient cell to cell propagation, by bypassing the host cell wall barrier. This is Movement protein from Artichoke mottled crinkle virus (AMCV).